Reading from the N-terminus, the 439-residue chain is Ribosomal protein uS12 methylthiotransferase RimO (439 aa).

The MTTase N-terminal domain maps to 5-115 (PKIGFVSLGC…LIEAVHTHAP (111 aa)). 6 residues coordinate [4Fe-4S] cluster: C14, C50, C79, C146, C150, and C153. In terms of domain architecture, Radical SAM core spans 132-369 (LTPRHYSYLK…MGLQAQISAD (238 aa)). The region spanning 372–439 (QRFVGTEQQV…ESTEYDLIAD (68 aa)) is the TRAM domain.

This sequence belongs to the methylthiotransferase family. RimO subfamily. [4Fe-4S] cluster is required as a cofactor.

It localises to the cytoplasm. The catalysed reaction is L-aspartate(89)-[ribosomal protein uS12]-hydrogen + (sulfur carrier)-SH + AH2 + 2 S-adenosyl-L-methionine = 3-methylsulfanyl-L-aspartate(89)-[ribosomal protein uS12]-hydrogen + (sulfur carrier)-H + 5'-deoxyadenosine + L-methionine + A + S-adenosyl-L-homocysteine + 2 H(+). Functionally, catalyzes the methylthiolation of an aspartic acid residue of ribosomal protein uS12. The sequence is that of Ribosomal protein uS12 methylthiotransferase RimO from Francisella philomiragia subsp. philomiragia (strain ATCC 25017 / CCUG 19701 / FSC 153 / O#319-036).